The chain runs to 676 residues: Kojibiose hydrolase (676 aa).

The N-terminal stretch at Met-1 to Ala-20 is a signal peptide. Catalysis depends on Glu-469, which acts as the Proton donor. Catalysis depends on Glu-613, which acts as the Proton acceptor.

Belongs to the glycosyl hydrolase 65 family.

It catalyses the reaction kojibiose + H2O = beta-D-glucose + D-glucose. Functionally, glycosidase that specifically hydrolyzes kojibiose to beta-glucose and glucose. Besides its activity on kojibiose, is also able to act on alpha-1,2-oligoglucans with a higher degree of polymerization. Shows weak activity on nigerose, but is not capable of breaking down trehalose, maltose, isomaltose, sucrose, isomaltulose, turanose or melezitose. This is Kojibiose hydrolase from Mucilaginibacter mallensis.